Here is a 140-residue protein sequence, read N- to C-terminus: Tumor protein D55 (140 aa).

The interval 1–28 is disordered; that stretch reads MPHARTETSVGTYESHSTSELEDLTEPE. Residues 7–18 are compositionally biased toward polar residues; the sequence is ETSVGTYESHST. Positions 28-57 form a coiled coil; sequence EQRELKTKLTKLEAEIVTLRHVLAAKERRC.

It belongs to the TPD52 family. As to quaternary structure, interacts with TPD52L2. As to expression, specifically expressed in testis. Expressed at 5.6-fold higher levels in adult testis than in fetal testis.

The chain is Tumor protein D55 (TPD52L3) from Homo sapiens (Human).